The primary structure comprises 164 residues: UPF0304 protein ESA_00925 (164 aa).

This sequence belongs to the UPF0304 family.

This Cronobacter sakazakii (strain ATCC BAA-894) (Enterobacter sakazakii) protein is UPF0304 protein ESA_00925.